We begin with the raw amino-acid sequence, 194 residues long: Type II methyltransferase M.MjaVI (194 aa).

The protein belongs to the N(4)/N(6)-methyltransferase family. N(4) subfamily.

The enzyme catalyses a 2'-deoxycytidine in DNA + S-adenosyl-L-methionine = an N(4)-methyl-2'-deoxycytidine in DNA + S-adenosyl-L-homocysteine + H(+). Its function is as follows. A beta subtype methylase that recognizes the double-stranded sequence 5'-CCGG-3', methylates C-1 on both strands, and protects the DNA from cleavage by the MjaVI endonuclease. This Methanocaldococcus jannaschii (strain ATCC 43067 / DSM 2661 / JAL-1 / JCM 10045 / NBRC 100440) (Methanococcus jannaschii) protein is Type II methyltransferase M.MjaVI (mjaVIM).